An 86-amino-acid polypeptide reads, in one-letter code: Small ribosomal subunit protein uS17 (86 aa).

This sequence belongs to the universal ribosomal protein uS17 family. As to quaternary structure, part of the 30S ribosomal subunit.

Functionally, one of the primary rRNA binding proteins, it binds specifically to the 5'-end of 16S ribosomal RNA. This Exiguobacterium sp. (strain ATCC BAA-1283 / AT1b) protein is Small ribosomal subunit protein uS17.